Consider the following 397-residue polypeptide: Metallophosphoesterase 1 (397 aa).

A helical membrane pass occupies residues 27–47 (IAVVFAVLLFCEFLIYYLAIF). The a divalent metal cation site is built by D77, D119, N157, H250, H304, and H306. The chain crosses the membrane as a helical span at residues 357–377 (VVLIIYCGMVGFLVVLTLTHF). A Di-lysine motif motif is present at residues 393–397 (KRKTR).

The protein belongs to the metallophosphoesterase superfamily. MPPE1 family. Interacts with GPI-anchor proteins (via the GPI portion). Interacts with TMED10. Mn(2+) serves as cofactor.

The protein resides in the endoplasmic reticulum-Golgi intermediate compartment membrane. Metallophosphoesterase that catalyzes the removal of a side-chain ethanolamine-phosphate (EtNP) from the second mannose of the GPI-anchor protein intermediate. Participates in the glycan remodeling steps of GPI-anchor maturation to allow an efficient transport of GPI-anchor proteins from the endoplasmic reticulum to the Golgi. This Pongo abelii (Sumatran orangutan) protein is Metallophosphoesterase 1.